The sequence spans 402 residues: S-adenosylmethionine synthase (402 aa).

140 to 145 (GNGSID) serves as a coordination point for ATP.

The protein belongs to the AdoMet synthase 2 family. Mg(2+) serves as cofactor.

It catalyses the reaction L-methionine + ATP + H2O = S-adenosyl-L-methionine + phosphate + diphosphate. It functions in the pathway amino-acid biosynthesis; S-adenosyl-L-methionine biosynthesis; S-adenosyl-L-methionine from L-methionine: step 1/1. Functionally, catalyzes the formation of S-adenosylmethionine from methionine and ATP. The chain is S-adenosylmethionine synthase from Picrophilus torridus (strain ATCC 700027 / DSM 9790 / JCM 10055 / NBRC 100828 / KAW 2/3).